Reading from the N-terminus, the 408-residue chain is G2/mitotic-specific cyclin-B (408 aa).

It belongs to the cyclin family. Cyclin AB subfamily. As to quaternary structure, interacts with the CDC2 protein kinase to form a serine/threonine kinase holoenzyme complex also known as maturation promoting factor (MPF). The cyclin subunit imparts substrate specificity to the complex.

In terms of biological role, essential for the control of the cell cycle at the G2/M (mitosis) transition. This Patella vulgata (Common limpet) protein is G2/mitotic-specific cyclin-B.